A 374-amino-acid chain; its full sequence is Ribosomal RNA large subunit methyltransferase G (374 aa).

It belongs to the methyltransferase superfamily. RlmG family.

The protein localises to the cytoplasm. It catalyses the reaction guanosine(1835) in 23S rRNA + S-adenosyl-L-methionine = N(2)-methylguanosine(1835) in 23S rRNA + S-adenosyl-L-homocysteine + H(+). In terms of biological role, specifically methylates the guanine in position 1835 (m2G1835) of 23S rRNA. The protein is Ribosomal RNA large subunit methyltransferase G of Pseudomonas savastanoi pv. phaseolicola (strain 1448A / Race 6) (Pseudomonas syringae pv. phaseolicola (strain 1448A / Race 6)).